The primary structure comprises 312 residues: Beta-ketoacyl-[acyl-carrier-protein] synthase III (312 aa).

Residues Cys112 and His237 contribute to the active site. The segment at Gln238 to Arg242 is ACP-binding. Residue Asn267 is part of the active site.

It belongs to the thiolase-like superfamily. FabH family. Homodimer.

The protein localises to the cytoplasm. It carries out the reaction (2S)-2-methylbutanoyl-CoA + malonyl-[ACP] + H(+) = (4S)-4-methyl-3-oxohexanoyl-[ACP] + CO2 + CoA. The catalysed reaction is 2-methylpropanoyl-CoA + malonyl-[ACP] + H(+) = 4-methyl-3-oxopentanoyl-[ACP] + CO2 + CoA. The enzyme catalyses 3-methylbutanoyl-CoA + malonyl-[ACP] + H(+) = 5-methyl-3-oxohexanoyl-[ACP] + CO2 + CoA. It catalyses the reaction malonyl-[ACP] + acetyl-CoA + H(+) = 3-oxobutanoyl-[ACP] + CO2 + CoA. It functions in the pathway lipid metabolism; fatty acid biosynthesis. Functionally, catalyzes the condensation reaction of fatty acid synthesis by the addition to an acyl acceptor of two carbons from malonyl-ACP. Catalyzes the first condensation reaction which initiates fatty acid synthesis and may therefore play a role in governing the total rate of fatty acid production. Possesses both acetoacetyl-ACP synthase and acetyl transacylase activities. Can use branched-chain acyl-CoAs, with a preference for 2-methylbutanoyl-CoA, the precursor of odd-numbered anteiso fatty acids, at 30 degrees Celsius, which is further increased at a low temperature. Shows weak activity with acetyl-CoA. The sequence is that of Beta-ketoacyl-[acyl-carrier-protein] synthase III from Listeria monocytogenes serotype 1/2a (strain 10403S).